The following is a 238-amino-acid chain: uncharacterized protein (238 aa).

One can recognise a Response regulatory domain in the interval 3–116; it reads RVIIVDDEQP…RLAKTLTRLS (114 aa). A 4-aspartylphosphate modification is found at Asp54. Residues 136-237 enclose the HTH LytTR-type domain; sequence IPCSGHNRIF…LKSLKEKLGI (102 aa).

This is an uncharacterized protein from Yersinia pestis.